Consider the following 320-residue polypeptide: Heterogeneous nuclear ribonucleoprotein A1 (320 aa).

Position 1 is an N-acetylmethionine (methionine 1). Serine 2 carries the N-acetylserine; in Heterogeneous nuclear ribonucleoprotein A1, N-terminally processed modification. Phosphoserine is present on serine 2. Residue lysine 3 is modified to N6-acetyllysine; alternate. Residue lysine 3 forms a Glycyl lysine isopeptide (Lys-Gly) (interchain with G-Cter in SUMO2); alternate linkage. 2 positions are modified to phosphoserine: serine 4 and serine 6. The tract at residues 4 to 94 (SESPKEPEQL…EPKRAVSRED (91 aa)) is globular A domain. A Glycyl lysine isopeptide (Lys-Gly) (interchain with G-Cter in SUMO2) cross-link involves residue lysine 8. 2 consecutive RRM domains span residues 14–97 (RKLF…DSQR) and 105–184 (KKIF…LSKQ). A Phosphoserine modification is found at serine 22. Residue lysine 78 forms a Glycyl lysine isopeptide (Lys-Gly) (interchain with G-Cter in SUMO2) linkage. The globular B domain stretch occupies residues 95–185 (SQRPGAHLTV…EVRKALSKQE (91 aa)). Residue lysine 113 forms a Glycyl lysine isopeptide (Lys-Gly) (interchain with G-Cter in SUMO) linkage. Glycyl lysine isopeptide (Lys-Gly) (interchain with G-Cter in SUMO2) cross-links involve residues lysine 179 and lysine 183. The disordered stretch occupies residues 182-216 (SKQEMASASSSQRGRSGSGNFGGGRGGGFGGNDNF). Position 192 is a phosphoserine; by MKNK2 (serine 192). Arginine 194 is subject to Asymmetric dimethylarginine; alternate. Residue arginine 194 is modified to Dimethylated arginine; alternate. Position 194 is an omega-N-methylarginine; alternate (arginine 194). Over residues 197–216 (SGSGNFGGGRGGGFGGNDNF) the composition is skewed to gly residues. Phosphoserine is present on serine 199. Asymmetric dimethylarginine; alternate occurs at positions 206, 218, 225, and 232. Arginine 206 is subject to Dimethylated arginine; alternate. Omega-N-methylarginine; alternate is present on residues arginine 206, arginine 218, arginine 225, and arginine 232. The RNA-binding RGG-box stretch occupies residues 218–240 (RGGNFSGRGGFGGSRGGGGYGGS). Arginine 225 carries the dimethylated arginine; alternate modification. The segment at 268 to 305 (NQSSNFGPMKGGNFGGRSSGPYGGGGQYFAKPRNQGGY) is nuclear targeting sequence. Residues 274–320 (GPMKGGNFGGRSSGPYGGGGQYFAKPRNQGGYGGSSSSSSYGSGRRF) form a disordered region. Residues 276 to 294 (MKGGNFGGRSSGPYGGGGQ) show a composition bias toward gly residues. Omega-N-methylarginine is present on arginine 284. Residue serine 285 is modified to Phosphoserine. Lysine 298 bears the N6-acetyllysine; alternate mark. Lysine 298 is covalently cross-linked (Glycyl lysine isopeptide (Lys-Gly) (interchain with G-Cter in SUMO2); alternate). Position 300 is an omega-N-methylarginine (arginine 300). The segment covering 308 to 320 (SSSSSSYGSGRRF) has biased composition (low complexity). Phosphoserine is present on serine 309. A phosphoserine; by MKNK2 mark is found at serine 310, serine 311, and serine 312. 2 positions are modified to phosphoserine: serine 313 and serine 316. Arginine 318 is subject to Omega-N-methylarginine.

As to quaternary structure, identified in the spliceosome C complex. Identified in a IGF2BP1-dependent mRNP granule complex containing untranslated mRNAs. Interacts with SEPT6. Interacts with C9orf72. Interacts with KHDRBS1. Interacts with UBQLN2. Interacts with PPIA/CYPA. Sumoylated.

The protein resides in the nucleus. The protein localises to the cytoplasm. In terms of biological role, involved in the packaging of pre-mRNA into hnRNP particles, transport of poly(A) mRNA from the nucleus to the cytoplasm and modulation of splice site selection. Plays a role in the splicing of pyruvate kinase PKM by binding repressively to sequences flanking PKM exon 9, inhibiting exon 9 inclusion and resulting in exon 10 inclusion and production of the PKM M2 isoform. Binds to the IRES and thereby inhibits the translation of the apoptosis protease activating factor APAF1. May bind to specific miRNA hairpins. The polypeptide is Heterogeneous nuclear ribonucleoprotein A1 (Hnrnpa1) (Mus musculus (Mouse)).